A 111-amino-acid chain; its full sequence is MVCMRFRYICHRKPERTFSFRGHYFPVCSRCTGIYLGAFTYFLYAFLIPVKYTAATVLLALLLVIPTFIDGFTQLMGYRESNNVLRFSTGLPAGIGLAVLTKVLKHLILHI.

A run of 2 helical transmembrane segments spans residues A45–I65 and L91–I111.

It localises to the cell membrane. This is an uncharacterized protein from Methanothermobacter thermautotrophicus (strain ATCC 29096 / DSM 1053 / JCM 10044 / NBRC 100330 / Delta H) (Methanobacterium thermoautotrophicum).